A 505-amino-acid polypeptide reads, in one-letter code: ATP synthase subunit alpha, cyanelle (505 aa).

Residue 170-177 (GDRQTGKT) participates in ATP binding.

The protein belongs to the ATPase alpha/beta chains family. F-type ATPases have 2 components, CF(1) - the catalytic core - and CF(0) - the membrane proton channel. CF(1) has five subunits: alpha(3), beta(3), gamma(1), delta(1), epsilon(1). CF(0) has four main subunits: a, b, b' and c.

Its subcellular location is the plastid. The protein localises to the cyanelle thylakoid membrane. It catalyses the reaction ATP + H2O + 4 H(+)(in) = ADP + phosphate + 5 H(+)(out). In terms of biological role, produces ATP from ADP in the presence of a proton gradient across the membrane. The alpha chain is a regulatory subunit. The polypeptide is ATP synthase subunit alpha, cyanelle (Cyanophora paradoxa).